A 642-amino-acid chain; its full sequence is Dihydrolipoyllysine-residue acetyltransferase component of pyruvate dehydrogenase complex, mitochondrial (642 aa).

The N-terminal 85 residues, 1-85, are a transit peptide targeting the mitochondrion; that stretch reads MWRVCARRAR…LLGSPSRRSY (85 aa). The tract at residues 80 to 99 is disordered; it reads PSRRSYSLPPHQKVPLPSLS. Lipoyl-binding domains follow at residues 90–166 and 217–293; these read HQKV…CITV and HMQI…CIIV. S99 bears the Phosphoserine mark. 2 positions are modified to N6-lipoyllysine: K131 and K258. The tract at residues 313–346 is disordered; sequence LKPQAAPPAPPPVAAVPPTPQPVAPTPSAAPAGP. Residues 317–337 are compositionally biased toward pro residues; the sequence is AAPPAPPPVAAVPPTPQPVAP. Residues 351 to 388 form the Peripheral subunit-binding (PSBD) domain; sequence FVSPLAKKLAAEKGIDLTQVKGTGPEGRIIKKDIDSFV. R456 contacts CoA. The residue at position 461 (K461) is an N6-acetyllysine. K468 carries the N6-succinyllysine modification. S470 serves as a coordination point for CoA. Position 542 is an N6-succinyllysine (K542). CoA-binding residues include S561, N562, and G586. Active-site residues include H615 and D619.

Belongs to the 2-oxoacid dehydrogenase family. In terms of assembly, part of the pyruvate dehydrogenase complex (PDHc) that is a multi-enzyme complex composed of multiple copies of three enzymes, pyruvate dehydrogenase (subunits PDH1A and PDHB, E1 component), dihydrolipoamide acetyltransferase (DLAT, E2 component), and dihydrolipoamide dehydrogenase (DLD, E3 component) to which is added an additional protein the E3-binding protein (PDHX, E3BP). In terms of structural architecture, the E2 and E3BP components assemble into a 60meric central core with icosahedral symmetry. The central core is decorated with E1 and E3 proteins. Currently, two alternative models for the E2:E3BP stoichiometry are considered as being either 48:12 (E2(48)-E3BP(12)) or 40:20 (E2(40)-E3BP(20)). Interacts with PDK2 and PDK3. Interacts with SIRT4. Interacts with PDHB. The cofactor is (R)-lipoate. Post-translationally, delipoylated at Lys-131 and Lys-258 by SIRT4, delipoylation decreases the PHD complex activity.

It localises to the mitochondrion matrix. It catalyses the reaction N(6)-[(R)-dihydrolipoyl]-L-lysyl-[protein] + acetyl-CoA = N(6)-[(R)-S(8)-acetyldihydrolipoyl]-L-lysyl-[protein] + CoA. In terms of biological role, as part of the pyruvate dehydrogenase complex, catalyzes the transfers of an acetyl group to a lipoic acid moiety. The pyruvate dehydrogenase complex, catalyzes the overall conversion of pyruvate to acetyl-CoA and CO(2), and thereby links cytoplasmic glycolysis and the mitochondrial tricarboxylic acid (TCA) cycle. This chain is Dihydrolipoyllysine-residue acetyltransferase component of pyruvate dehydrogenase complex, mitochondrial, found in Mus musculus (Mouse).